A 246-amino-acid polypeptide reads, in one-letter code: Mast cell protease 1 (246 aa).

The N-terminal stretch at 1 to 18 (MQALLFLMALLLPSGAGA) is a signal peptide. Residues 19–20 (EE) constitute a propeptide, activation peptide. The 224-residue stretch at 21 to 244 (IIGGVEARPH…YVPWIKTVIN (224 aa)) folds into the Peptidase S1 domain. Cysteines 50 and 66 form a disulfide. His-65 serves as the catalytic Charge relay system. A glycan (N-linked (GlcNAc...) asparagine) is linked at Asn-102. Asp-109 (charge relay system) is an active-site residue. Intrachain disulfides connect Cys-143–Cys-208 and Cys-174–Cys-187. The active-site Charge relay system is the Ser-202.

This sequence belongs to the peptidase S1 family. Granzyme subfamily. Mucosal mast cells.

The protein localises to the secreted. It is found in the cytoplasmic granule. Functionally, has a chymotrypsin-like activity. The protein is Mast cell protease 1 (Mcpt1) of Mus musculus (Mouse).